Consider the following 318-residue polypeptide: NADH-ubiquinone oxidoreductase chain 1 (318 aa).

The next 8 membrane-spanning stretches (helical) occupy residues Phe2–Leu22, Met70–Pro90, Leu100–Gly120, Val136–Met156, Leu172–Glu192, Leu222–Phe242, Glu253–Ile273, and Leu294–Ile314.

Belongs to the complex I subunit 1 family. Core subunit of respiratory chain NADH dehydrogenase (Complex I) which is composed of 45 different subunits.

Its subcellular location is the mitochondrion inner membrane. It carries out the reaction a ubiquinone + NADH + 5 H(+)(in) = a ubiquinol + NAD(+) + 4 H(+)(out). Its function is as follows. Core subunit of the mitochondrial membrane respiratory chain NADH dehydrogenase (Complex I) which catalyzes electron transfer from NADH through the respiratory chain, using ubiquinone as an electron acceptor. Essential for the catalytic activity and assembly of complex I. In Balaenoptera physalus (Fin whale), this protein is NADH-ubiquinone oxidoreductase chain 1 (MT-ND1).